Here is a 1114-residue protein sequence, read N- to C-terminus: MMRHSSLRLIIGGLILLLFVLNVFSKEQGSHSHKRSHSAKRFSRDSNSARERRPNIILILTDDQDVELGSLNFMPRTLRLLRDGGAEFRHAYTTTPMCCPARSSLLTGMYVHNHMVFTNNDNCSSPQWQATHETRSYATYLSNAGYRTGYFGKYLNKYNGSYIPPGWREWGGLIMNSKYYNYSINLNGQKIKHGFDYAKDYYPDLIANDSIAFLRSSKQQNQRKPVLLTMSFPAPHGPEDSAPQYSHLFFNVTTHHTPSYDHAPNPDKQWILRVTEPMQPVHKRFTNLLMTKRLQTLQSVDVAVERVYNELKELGELDNTYIVYTSDHGYHLGQFGLIKGKSFPFEFDVRVPFLIRGPGIQASKVVNEIVLNVDLAPTFLDMGGVPTPQHMDGRSILPLLLSRNRAVRDNWPDSFLIESSGRRETAEQIAESRARLQIERRNMKLANSSLLEDFLEGAGESTTIVSSSSTAATLMSSTAQQPEDGEEEVETDNEEDDVDGDGAMDSSAAALEEDDLDDAAFEEGDEELDQEFQQNNDLPLAPYITKMMRLNSECSDPALLKNCLPGQKWKCVNEEGRWRKHKCKFHLQLEHQLAAMPRKQYQRNCACFTPDGVVYTKIRAPSAGLHRVNKRTHNGPGRRRNKREVFHTELPDEMEELLDLHQVVDQLVDHTHRSKRDLPASSNETIAQVIQQIQSTLEILELKFNEHELHASNSSGNSYERGEKYTKSGGHRCFVDATTAKVNCSNVIYDDEKTWRTSRTQIDMLIKLLKDKIGKLKEMKKQLRESNKQALAAGRRNDNRRRNDQSVLDSGAGPEFNMSYFTEISSTPRSNVVGQTEVFQGYGSASAFDSLEQTQSHRFTPRAECYCEPDVGENHADSKEMAREARRKLKEERQRKKERKRIKKARLEKECLSEKMNCFSHDNQHWRTAPLWNDSPFCFCMNANNNTYSCLRTINGTHNFLYCEFTTGLITFYNLTIDRFETINRAAGLTPGERSHMHDALDQLKSCRGRSCSIRRHQNHLEGGSSAPLLPINQVHRNNKRKHSPLAGAVGNYAFVGPRLDMEALPPIKRRKLSKYNRLTGSQQSHMKRRPWKQTPLQQSPRFLRTHSVTPAQA.

The signal sequence occupies residues 1-25 (MMRHSSLRLIIGGLILLLFVLNVFS). 3 residues coordinate Ca(2+): Asp62, Asp63, and Cys98. Cys98 (nucleophile) is an active-site residue. Cys98 is modified (3-oxoalanine (Cys)). Asn122, Asn159, Asn181, Asn208, and Asn251 each carry an N-linked (GlcNAc...) asparagine glycan. Ca(2+) contacts are provided by Asp327 and His328. A glycan (N-linked (GlcNAc...) asparagine) is linked at Asn447. A compositionally biased stretch (low complexity) spans 466-479 (SSSSTAATLMSSTA). The tract at residues 466-504 (SSSSTAATLMSSTAQQPEDGEEEVETDNEEDDVDGDGAM) is disordered. Residues 483–502 (EDGEEEVETDNEEDDVDGDG) are compositionally biased toward acidic residues. Asn683, Asn713, and Asn743 each carry an N-linked (GlcNAc...) asparagine glycan. The segment at 781–812 (KQLRESNKQALAAGRRNDNRRRNDQSVLDSGA) is disordered. Basic and acidic residues predominate over residues 795–804 (RRNDNRRRND). Residue Asn817 is glycosylated (N-linked (GlcNAc...) asparagine). Basic and acidic residues predominate over residues 876–895 (ADSKEMAREARRKLKEERQR). Residues 876 to 901 (ADSKEMAREARRKLKEERQRKKERKR) are disordered. N-linked (GlcNAc...) asparagine glycans are attached at residues Asn945, Asn955, and Asn974. Residues 1073–1114 (LSKYNRLTGSQQSHMKRRPWKQTPLQQSPRFLRTHSVTPAQA) are disordered. Residues 1095 to 1114 (TPLQQSPRFLRTHSVTPAQA) show a composition bias toward polar residues.

Belongs to the sulfatase family. Requires Ca(2+) as cofactor. Post-translationally, the conversion to 3-oxoalanine (also known as C-formylglycine, FGly), of a serine or cysteine residue in prokaryotes and of a cysteine residue in eukaryotes, is critical for catalytic activity.

Its subcellular location is the endoplasmic reticulum. It is found in the golgi apparatus. The protein resides in the golgi stack. It localises to the cell surface. In Drosophila melanogaster (Fruit fly), this protein is Extracellular sulfatase SULF-1 homolog (Sulf1).